Reading from the N-terminus, the 286-residue chain is MTALLLDGRGLAKELKAQISQQGAEFKARTGYAPQLVVIQVAGNAASDWYVRSIRRSCEGVGFGFALQRLPETSDQATLEAAIQQASNDPAIHGIIIQMPLPSQLSADGAVAALNPQKDVDGLHPTNAGRLAQGLTALVPNTPAGGMALLDRYQINLAGKHAVVVGRSNVVGKPLAQLLLARHATVTICHSRTANLAEVIRQGDIVAAAVGKAGLVTGEMLKPGAVVLDFGINEVAEGQVVGDVDWESASKVASAITPVPGGTGPVTNMMLLQNTLQAAQSLAEQA.

Residues G166–S168, S191, and I232 each bind NADP(+).

Belongs to the tetrahydrofolate dehydrogenase/cyclohydrolase family. As to quaternary structure, homodimer.

It carries out the reaction (6R)-5,10-methylene-5,6,7,8-tetrahydrofolate + NADP(+) = (6R)-5,10-methenyltetrahydrofolate + NADPH. The catalysed reaction is (6R)-5,10-methenyltetrahydrofolate + H2O = (6R)-10-formyltetrahydrofolate + H(+). Its pathway is one-carbon metabolism; tetrahydrofolate interconversion. In terms of biological role, catalyzes the oxidation of 5,10-methylenetetrahydrofolate to 5,10-methenyltetrahydrofolate and then the hydrolysis of 5,10-methenyltetrahydrofolate to 10-formyltetrahydrofolate. This is Bifunctional protein FolD from Herpetosiphon aurantiacus (strain ATCC 23779 / DSM 785 / 114-95).